We begin with the raw amino-acid sequence, 202 residues long: UPF0301 protein mlr7511 (202 aa).

Belongs to the UPF0301 (AlgH) family.

In Mesorhizobium japonicum (strain LMG 29417 / CECT 9101 / MAFF 303099) (Mesorhizobium loti (strain MAFF 303099)), this protein is UPF0301 protein mlr7511.